A 471-amino-acid chain; its full sequence is MSICPHIQQVFQNEKSKDGVLKTCNAARYILNHSVPKEKFLNTMKCGTCHEINSGATFMCLQCGFCGCWNHSHFLSHSKQIGHIFGINSNNGLLFCFKCEDYIGNIDLINDAILAKYWDDVCTKTMVPSMERRDGLSGLINMGSTCFMSSILQCLIHNPYFIRHSMSQIHSNNCKVRSPDKCFSCALDKIVHELYGALNTKQASSSSTSTNRQTGFIYLLTCAWKINQNLAGYSQQDAHEFWQFIINQIHQSYVLDLPNAKEVSRANNKQCECIVHTVFEGSLESSIVCPGCQNNSKTTIDPFLDLSLDIKDKKKLYECLDSFHKKEQLKDFNYHCGECNSTQDAIKQLGIHKLPSVLVLQLKRFEHLLNGSNRKLDDFIEFPTYLNMKNYCSTKEKDKHSENGKVPDIIYELIGIVSHKGTVNEGHYIAFCKISGGQWFKFNDSMVSSISQEEVLKEQAYLLFYTIRQVN.

Residues Cys4, His6, Cys46, Cys49, Cys60, Cys63, Cys68, His73, His77, His83, Cys96, and Cys99 each contribute to the Zn(2+) site. Residues 22–122 form a UBP-type; degenerate zinc finger; it reads KTCNAARYIL…ILAKYWDDVC (101 aa). Residues 137–468 enclose the USP domain; that stretch reads SGLINMGSTC…QAYLLFYTIR (332 aa). Cys146 functions as the Nucleophile in the catalytic mechanism. Residues His170, Cys174, Cys182, Cys185, His250, Cys271, Cys273, His276, Cys289, Cys292, Cys336, and Cys339 each coordinate Zn(2+). The active-site Proton acceptor is His427.

It belongs to the peptidase C19 family. UBP8 subfamily. In terms of assembly, component of the 1.8 MDa SAGA (Spt-Ada-Gcn5 acetyltransferase) complex, which is composed of 19 subunits TRA1, SPT7, TAF5, NGG1/ADA3, SGF73, SPT20/ADA5, SPT8, TAF12, TAF6, HFI1/ADA1, UBP8, GCN5, ADA2, SPT3, SGF29, TAF10, TAF9, SGF11 and SUS1. The SAGA complex is composed of 4 modules, namely the HAT (histone acetyltransferase) module (GCN5, ADA2, NGG1/ADA3 and SGF29), the DUB (deubiquitinating) module (UBP8, SGF11, SGF73 and SUS1), the core or TAF (TBP-associated factor) module (TAF5, TAF6, TAF9, TAF10 and TAF12), and the Tra1 or SPT (Suppressor of Ty) module (TRA1, HFI1/ADA1, SPT3, SPT7, SPT8 and SPT20/ADA5). The Tra1/SPT module binds activators, the core module recruits TBP (TATA-binding protein), the HAT module contains the histone H3 acetyltransferase GCN5, and the DUB module comprises the histone H2B deubiquitinase UBP8. Also identified in an altered form of SAGA, named SALSA (SAGA altered, Spt8 absent) or SLIK (SAGA-like) complex, which contains a C-terminal truncated form of SPT7 and is missing SPT8. However, it has been shown that the SAGA and SAGA-like SALSA/SLIK transcriptional coactivators are structurally and biochemically equivalent.

The protein resides in the nucleus. It carries out the reaction Thiol-dependent hydrolysis of ester, thioester, amide, peptide and isopeptide bonds formed by the C-terminal Gly of ubiquitin (a 76-residue protein attached to proteins as an intracellular targeting signal).. Functionally, histone deubiquitinating enzyme component of the transcription coactivator SAGA complex. SAGA acts as a general cofactor required for essentially all RNA polymerase II transcription. At the promoters, SAGA is required for transcription pre-initiation complex (PIC) recruitment. It influences RNA polymerase II transcriptional activity through different activities such as TBP interaction (via core/TAF module) and promoter selectivity, interaction with transcription activators (via Tra1/SPT module), and chromatin modification through histone acetylation (via HAT module) and deubiquitination (via DUB module). SAGA preferentially acetylates histones H3 (to form H3K9ac, H3K14ac, H3K18ac and H3K23ac) and H2B and deubiquitinates histone H2B. SAGA interacts with DNA via upstream activating sequences (UASs). Also identified in a modified version of SAGA named SALSA or SLIK. The cleavage of SPT7 and the absence of the SPT8 subunit in SLIK neither drive any major conformational differences in its structure compared with SAGA, nor significantly affect HAT, DUB, or DNA-binding activities. Within the DUB module, the correctly positioned zinc finger domains of SGF11 and SGF73 are both required to fully activate the ubiquitin hydrolase UBP8. The DUB module is also linked to the splicing efficiency of many transcripts. The polypeptide is Ubiquitin carboxyl-terminal hydrolase 8 (UBP8) (Saccharomyces cerevisiae (strain ATCC 204508 / S288c) (Baker's yeast)).